The chain runs to 607 residues: Glutamyl-tRNA(Gln) amidotransferase subunit E (607 aa).

The protein belongs to the GatB/GatE family. GatE subfamily. In terms of assembly, heterodimer of GatD and GatE.

The enzyme catalyses L-glutamyl-tRNA(Gln) + L-glutamine + ATP + H2O = L-glutaminyl-tRNA(Gln) + L-glutamate + ADP + phosphate + H(+). In terms of biological role, allows the formation of correctly charged Gln-tRNA(Gln) through the transamidation of misacylated Glu-tRNA(Gln) in organisms which lack glutaminyl-tRNA synthetase. The reaction takes place in the presence of glutamine and ATP through an activated gamma-phospho-Glu-tRNA(Gln). The GatDE system is specific for glutamate and does not act on aspartate. The protein is Glutamyl-tRNA(Gln) amidotransferase subunit E of Pyrobaculum islandicum (strain DSM 4184 / JCM 9189 / GEO3).